The sequence spans 195 residues: C2 domain-containing protein DDB_G0290753 (195 aa).

In terms of domain architecture, C2 spans 38 to 161 (KKLTKETKFE…NIKKYSYTFK (124 aa)). Residues Asp72, Asp78, Asp131, Asp133, and Asp139 each contribute to the Ca(2+) site.

Ca(2+) serves as cofactor.

This chain is C2 domain-containing protein DDB_G0290753, found in Dictyostelium discoideum (Social amoeba).